The sequence spans 250 residues: Triosephosphate isomerase (250 aa).

A substrate-binding site is contributed by 9–11 (NWK). His95 (electrophile) is an active-site residue. Glu167 (proton acceptor) is an active-site residue. Substrate contacts are provided by residues Gly173, Ser213, and 234–235 (GG).

It belongs to the triosephosphate isomerase family. As to quaternary structure, homodimer.

The protein resides in the cytoplasm. It carries out the reaction D-glyceraldehyde 3-phosphate = dihydroxyacetone phosphate. It functions in the pathway carbohydrate biosynthesis; gluconeogenesis. Its pathway is carbohydrate degradation; glycolysis; D-glyceraldehyde 3-phosphate from glycerone phosphate: step 1/1. Its function is as follows. Involved in the gluconeogenesis. Catalyzes stereospecifically the conversion of dihydroxyacetone phosphate (DHAP) to D-glyceraldehyde-3-phosphate (G3P). The protein is Triosephosphate isomerase of Flavobacterium psychrophilum (strain ATCC 49511 / DSM 21280 / CIP 103535 / JIP02/86).